Here is a 59-residue protein sequence, read N- to C-terminus: Large ribosomal subunit protein bL32 (59 aa).

Positions 1 to 20 (MAVQQNKKSRSRKGMRRSHD) are disordered. Residues 7–19 (KKSRSRKGMRRSH) are compositionally biased toward basic residues.

This sequence belongs to the bacterial ribosomal protein bL32 family.

The polypeptide is Large ribosomal subunit protein bL32 (Nitratidesulfovibrio vulgaris (strain ATCC 29579 / DSM 644 / CCUG 34227 / NCIMB 8303 / VKM B-1760 / Hildenborough) (Desulfovibrio vulgaris)).